We begin with the raw amino-acid sequence, 152 residues long: D-aminoacyl-tRNA deacylase (152 aa).

The Gly-cisPro motif, important for rejection of L-amino acids motif lies at 142–143; the sequence is GP.

Belongs to the DTD family. As to quaternary structure, homodimer.

It localises to the cytoplasm. The enzyme catalyses glycyl-tRNA(Ala) + H2O = tRNA(Ala) + glycine + H(+). It carries out the reaction a D-aminoacyl-tRNA + H2O = a tRNA + a D-alpha-amino acid + H(+). Its function is as follows. An aminoacyl-tRNA editing enzyme that deacylates mischarged D-aminoacyl-tRNAs. Also deacylates mischarged glycyl-tRNA(Ala), protecting cells against glycine mischarging by AlaRS. Acts via tRNA-based rather than protein-based catalysis; rejects L-amino acids rather than detecting D-amino acids in the active site. By recycling D-aminoacyl-tRNA to D-amino acids and free tRNA molecules, this enzyme counteracts the toxicity associated with the formation of D-aminoacyl-tRNA entities in vivo and helps enforce protein L-homochirality. This is D-aminoacyl-tRNA deacylase from Paraburkholderia phymatum (strain DSM 17167 / CIP 108236 / LMG 21445 / STM815) (Burkholderia phymatum).